The following is a 139-amino-acid chain: MRIMGLDVGSKTVGVAISDPLGFTAQGLEIIKIDEEKAEFGFTRLEELVKQYQVEQFVIGLPKNMNNTNGPRVDASITYGSHIEHLFGLPVHYQDERLTTVEAERMLIEQADISRGKRKKVIDKLAAQLILQNYLNRNF.

It belongs to the YqgF nuclease family.

It localises to the cytoplasm. Its function is as follows. Could be a nuclease involved in processing of the 5'-end of pre-16S rRNA. In Streptococcus pyogenes serotype M49 (strain NZ131), this protein is Putative pre-16S rRNA nuclease.